The sequence spans 239 residues: tRNA (guanine-N(1)-)-methyltransferase (239 aa).

S-adenosyl-L-methionine is bound by residues glycine 108 and 127–132 (LGDFVL).

The protein belongs to the RNA methyltransferase TrmD family. Homodimer.

It localises to the cytoplasm. It catalyses the reaction guanosine(37) in tRNA + S-adenosyl-L-methionine = N(1)-methylguanosine(37) in tRNA + S-adenosyl-L-homocysteine + H(+). Functionally, specifically methylates guanosine-37 in various tRNAs. The sequence is that of tRNA (guanine-N(1)-)-methyltransferase from Streptococcus pyogenes serotype M6 (strain ATCC BAA-946 / MGAS10394).